Here is a 477-residue protein sequence, read N- to C-terminus: Ribulose bisphosphate carboxylase large chain (477 aa).

Positions 1–2 (MS) are excised as a propeptide. P3 carries the N-acetylproline modification. Substrate contacts are provided by N123 and T173. K175 (proton acceptor) is an active-site residue. Residue K177 participates in substrate binding. Positions 201, 203, and 204 each coordinate Mg(2+). At K201 the chain carries N6-carboxylysine. H294 serves as the catalytic Proton acceptor. 3 residues coordinate substrate: R295, H327, and S379.

It belongs to the RuBisCO large chain family. Type I subfamily. Heterohexadecamer of 8 large chains and 8 small chains; disulfide-linked. The disulfide link is formed within the large subunit homodimers. Mg(2+) is required as a cofactor. In terms of processing, the disulfide bond which can form between Cys-247 in the large chain dimeric partners within the hexadecamer appears to be associated with oxidative stress and protein turnover.

Its subcellular location is the plastid. It is found in the chloroplast. The enzyme catalyses 2 (2R)-3-phosphoglycerate + 2 H(+) = D-ribulose 1,5-bisphosphate + CO2 + H2O. It carries out the reaction D-ribulose 1,5-bisphosphate + O2 = 2-phosphoglycolate + (2R)-3-phosphoglycerate + 2 H(+). In terms of biological role, ruBisCO catalyzes two reactions: the carboxylation of D-ribulose 1,5-bisphosphate, the primary event in carbon dioxide fixation, as well as the oxidative fragmentation of the pentose substrate in the photorespiration process. Both reactions occur simultaneously and in competition at the same active site. This chain is Ribulose bisphosphate carboxylase large chain (rbcL), found in Triticum aestivum (Wheat).